The primary structure comprises 138 residues: Large ribosomal subunit protein uL16 (138 aa).

Over residues 1-16 the composition is skewed to basic residues; the sequence is MLIPRRVKHRKQHHPS. The segment at 1–25 is disordered; it reads MLIPRRVKHRKQHHPSRSGAAKGGT.

It belongs to the universal ribosomal protein uL16 family. Part of the 50S ribosomal subunit.

Its function is as follows. Binds 23S rRNA and is also seen to make contacts with the A and possibly P site tRNAs. This is Large ribosomal subunit protein uL16 from Rhodococcus jostii (strain RHA1).